The chain runs to 291 residues: Acetyl-coenzyme A carboxylase carboxyl transferase subunit beta (291 aa).

The tract at residues 1–23 (MSWLSKLMPSGIRTDNTPSKKRS) is disordered. The 264-residue stretch at 28 to 291 (LWEKCSNCGS…LGRQPAPEVA (264 aa)) folds into the CoA carboxyltransferase N-terminal domain. Zn(2+) contacts are provided by cysteine 32, cysteine 35, cysteine 51, and cysteine 54. The C4-type zinc finger occupies 32–54 (CSNCGSALYRPELEENLEVCPKC).

Belongs to the AccD/PCCB family. Acetyl-CoA carboxylase is a heterohexamer composed of biotin carboxyl carrier protein (AccB), biotin carboxylase (AccC) and two subunits each of ACCase subunit alpha (AccA) and ACCase subunit beta (AccD). It depends on Zn(2+) as a cofactor.

It is found in the cytoplasm. It carries out the reaction N(6)-carboxybiotinyl-L-lysyl-[protein] + acetyl-CoA = N(6)-biotinyl-L-lysyl-[protein] + malonyl-CoA. It functions in the pathway lipid metabolism; malonyl-CoA biosynthesis; malonyl-CoA from acetyl-CoA: step 1/1. Its function is as follows. Component of the acetyl coenzyme A carboxylase (ACC) complex. Biotin carboxylase (BC) catalyzes the carboxylation of biotin on its carrier protein (BCCP) and then the CO(2) group is transferred by the transcarboxylase to acetyl-CoA to form malonyl-CoA. In Stenotrophomonas maltophilia (strain K279a), this protein is Acetyl-coenzyme A carboxylase carboxyl transferase subunit beta.